The following is an 89-amino-acid chain: Small ribosomal subunit protein uS15 (89 aa).

This sequence belongs to the universal ribosomal protein uS15 family. Part of the 30S ribosomal subunit. Forms a bridge to the 50S subunit in the 70S ribosome, contacting the 23S rRNA.

Functionally, one of the primary rRNA binding proteins, it binds directly to 16S rRNA where it helps nucleate assembly of the platform of the 30S subunit by binding and bridging several RNA helices of the 16S rRNA. In terms of biological role, forms an intersubunit bridge (bridge B4) with the 23S rRNA of the 50S subunit in the ribosome. This Prochlorococcus marinus subsp. pastoris (strain CCMP1986 / NIES-2087 / MED4) protein is Small ribosomal subunit protein uS15.